Reading from the N-terminus, the 343-residue chain is NAC domain-containing protein 4 (343 aa).

An NAC domain is found at Leu-12 to Lys-168. A DNA-binding region spans residues Val-109–Gly-174. Positions Gly-304–Lys-333 are disordered. Residues Ser-311–Gln-332 are compositionally biased toward polar residues.

Expressed in roots, tiller buds, stems, leaves, lamina joints and the young husks. Expressed in embryos, coleoptiles, radicles, leaf pulvinus, ligules, panicles, palea and lemma, anthers, and the internode of the peduncles. Expressed in young leaves, root meristems, florescence meristems and young spikelets.

Its subcellular location is the nucleus. Functionally, transcription factor involved in the regulation of tiller bud outgrowth, but does not seem to regulate tiller bud initiation. Possesses transactivation activity in yeast. Involved in the regulation of plant architecture and grain yield. Acts as a negative regulator of plant height and flowering time. Regulates directly key genes of the gibberellin (GA) pathway by binding to their promoters. Positively regulates leaf senescence in an age-dependent manner. Activates directly the expression of the chlorophyll degradation genes SGR and NYC3. Positively regulates the level of abscisic acid (ABA) by directly up-regulating the expression of the ABA biosynthetic genes NCED3 and ZEP, and down-regulating the ABA catabolic gene CYP707A5/ABA8OX1. Promotes salt-induced cell death accompanied by the loss of plasma membrane integrity, nuclear DNA fragmentation, and changes of caspase-like activity. Targets genes that encoded a reactive oxygen species (ROS) scavenger COX11 and a caspase-like protease AP37. Activates the potassium efflux channels GORK and SKOR. Acts as a positive regulator of drought and salt tolerance through ABA-mediated pathways. Acts as a negative regulator of root growth. Functions as an upstream integrator of auxin and cytokinin signals that affect CROWN ROOTLESS (CRL) and cyclin-dependent protein kinase (CDK) genes to regulate cell division during root development. Binds directly to the promoters of the auxin inactivation-related genes GH3.6 and GH3.8, the auxin signaling-related gene ARF25, and the cytokinin oxidase gene CKX4. Activates directly the expressions of the 1-aminocyclopropane-1-carboxylate oxidase genes ACO1 and ACO3, enhancing ethylene synthesis, and then retarding seedling establishment. The protein is NAC domain-containing protein 4 of Oryza sativa subsp. japonica (Rice).